The chain runs to 88 residues: EMBRYO SURROUNDING FACTOR 1-like protein 3 (88 aa).

The first 22 residues, 1 to 22 (MKLSQIALICIVIASLFAMHEC), serve as a signal peptide directing secretion. 3 disulfide bridges follow: C41–C56, C54–C80, and C57–C67.

The protein belongs to the MEG family. Expressed in stems, leaves and flowers.

The protein is EMBRYO SURROUNDING FACTOR 1-like protein 3 (ESFL3) of Arabidopsis thaliana (Mouse-ear cress).